We begin with the raw amino-acid sequence, 441 residues long: C4-dicarboxylate transport protein (441 aa).

Residues 1 to 30 (MIIEHSAEVRGKTPLYRHLYVQVLAAIAAG) lie on the Cytoplasmic side of the membrane. A helical transmembrane segment spans residues 31-49 (ILLGHFYPDIGTELKPLGD). Residues 50–68 (AFIRLVKMIIAPVIFLTVA) lie on the Periplasmic side of the membrane. The helical transmembrane segment at 69–87 (TGIAGMTDLAKVGRVAGKA) threads the bilayer. Topologically, residues 88 to 99 (MIYFLAFSTLAL) are cytoplasmic. A helical transmembrane segment spans residues 100-118 (VVGLVVANVVQPGAGMHID). Over 119 to 149 (PASLDAKAVATYAEKAHEQSITGFLMNIIPT) the chain is Periplasmic. A helical membrane pass occupies residues 150–168 (TLVGAFAEGDILQVLFISV). The Cytoplasmic portion of the chain corresponds to 169–171 (LFG). A helical membrane pass occupies residues 172–190 (ISLAIVGKKAEPVVDFLQA). At 191 to 209 (LTLPIFRLVAILMKAAPIG) the chain is on the periplasmic side. A helical transmembrane segment spans residues 210 to 228 (AFGAMAFTIGKYGIASIAN). Topologically, residues 229–241 (LAMLIGTFYLTSF) are cytoplasmic. A helical transmembrane segment spans residues 242–260 (LFVFIVLGAVARYNGFSIL). The Periplasmic portion of the chain corresponds to 261-281 (SLIRYIKEELLLVLGTSSSEA). Residues 282–300 (ALPGLMNKMEKAGCKRSVV) form a helical membrane-spanning segment. Residues 301-320 (GLVIPTGYSFNLDGTNIYMT) are Cytoplasmic-facing. Residues 321-339 (LAALFIAQATDTPLSYGDQ) form a helical membrane-spanning segment. The Periplasmic segment spans residues 340 to 350 (ILLLLVAMLSS). Residues 351–369 (KGAAGITGAGFITLAATLS) traverse the membrane as a helical segment. Residues 370 to 378 (VVPSVPVAG) lie on the Cytoplasmic side of the membrane. The helical transmembrane segment at 379–398 (MALILGIDRFMSECRALTNF) threads the bilayer. Residues 399-405 (VGNAVAT) are Periplasmic-facing. The chain crosses the membrane as a helical span at residues 406–424 (IVVAKWEGELDQAQLSAAL). Residues 425 to 441 (GGEASVEAIPAVVQPAE) are Cytoplasmic-facing.

It belongs to the dicarboxylate/amino acid:cation symporter (DAACS) (TC 2.A.23) family.

It localises to the cell inner membrane. Responsible for the transport of dicarboxylates such as succinate, fumarate, and malate from the periplasm across the inner membrane. This transport system plays an important role in the energy supply of rhizobium-legume symbionts. The polypeptide is C4-dicarboxylate transport protein (dctA) (Rhizobium meliloti (strain 1021) (Ensifer meliloti)).